Reading from the N-terminus, the 175-residue chain is ATP synthase subunit d, mitochondrial (175 aa).

Serine 2 is subject to N-acetylserine.

In terms of assembly, F-type ATP synthases have 2 components, the catalytic core F(1) and the membrane-embedded component F(0), linked together by a central stalk and a peripheral stalk. The central stalk, also called rotor shaft, is often seen as part of F(1). The peripheral stalk is seen as part of F(0). F(0) contains the membrane channel next to the rotor. F-type ATP synthases form dimers but each monomer functions independently in ATP generation. The dimer consists of 18 different polypeptides: ATP1 (subunit alpha, part of F(1), 3 molecules per monomer), ATP2 (subunit beta, part of F(1), 3 molecules per monomer), ATP3 (subunit gamma, part of the central stalk), ATP4 (subunit b, part of the peripheral stalk), ATP5/OSCP (subunit 5/OSCP, part of the peripheral stalk), ATP6 (subunit a, part of the peripheral stalk), ATP7 (subunit d, part of the peripheral stalk), ATP8 (subunit 8, part of the peripheral stalk), OLI1 (subunit c, part of the rotor, 10 molecules per monomer), ATP14 (subunit h, part of the peripheral stalk), ATP15 (subunit epsilon, part of the central stalk), ATP16 (subunit delta, part of the central stalk), ATP17 (subunit f, part of the peripheral stalk), ATP18 (subunit i/j, part of the peripheral stalk). Dimer-specific subunits are ATP19 (subunit k, at interface between monomers), ATP20 (subunit g, at interface between monomers), TIM11 (subunit e, at interface between monomers). Also contains subunit L.

The protein localises to the mitochondrion inner membrane. Its function is as follows. Mitochondrial membrane ATP synthase (F(1)F(0) ATP synthase or Complex V) produces ATP from ADP in the presence of a proton gradient across the membrane which is generated by electron transport complexes of the respiratory chain. F-type ATP synthases consist of two structural domains, F(1) - containing the extramembraneous catalytic core, and F(0) - containing the membrane proton channel, linked together by a central stalk and a peripheral stalk. During catalysis, ATP synthesis in the catalytic domain of F(1) is coupled via a rotary mechanism of the central stalk subunits to proton translocation. Part of the complex F(0) domain and the peripheral stalk, which acts as a stator to hold the catalytic alpha/ATP1(3)beta/ATP2(3) subcomplex and subunit a/ATP6 static relative to the rotary elements. This is ATP synthase subunit d, mitochondrial from Pichia angusta (Yeast).